The sequence spans 366 residues: GTP cyclohydrolase 1 type 2 homolog (366 aa).

Zn(2+) is bound by residues His-64, His-65, Asp-102, His-326, and Glu-329.

It belongs to the GTP cyclohydrolase I type 2/NIF3 family. In terms of assembly, homohexamer.

This chain is GTP cyclohydrolase 1 type 2 homolog, found in Staphylococcus aureus (strain MRSA252).